The primary structure comprises 277 residues: Caspase-3 (277 aa).

M1 carries the N-acetylmethionine modification. Propeptides lie at residues 1 to 9 and 10 to 28; these read MENTENSVD and SKSI…KSVD. A compositionally biased stretch (polar residues) spans 1–10; the sequence is MENTENSVDS. The segment at 1–25 is disordered; sequence MENTENSVDSKSIKNSEPKIIHGSK. Position 11 is an N6-acetyllysine (K11). Basic and acidic residues predominate over residues 11-20; that stretch reads KSIKNSEPKI. Residue S26 is modified to Phosphoserine. Active-site residues include H121 and C163. C163 bears the S-nitrosocysteine; in inhibited form mark.

This sequence belongs to the peptidase C14A family. Heterotetramer that consists of two anti-parallel arranged heterodimers, each one formed by a 17 kDa (p17) and a 12 kDa (p12) subunit. Interacts with BIRC6/bruce. Post-translationally, cleavage by granzyme B, caspase-6, caspase-8 and caspase-10 generates the two active subunits. Additional processing of the propeptides is likely due to the autocatalytic activity of the activated protease. Active heterodimers between the small subunit of caspase-7 protease and the large subunit of caspase-3 also occur and vice versa. In terms of processing, S-nitrosylated on its catalytic site cysteine in unstimulated cell lines and denitrosylated upon activation of the Fas apoptotic pathway, associated with an increase in intracellular caspase activity. Fas therefore activates caspase-3 not only by inducing the cleavage of the caspase zymogen to its active subunits, but also by stimulating the denitrosylation of its active site thiol. Ubiquitinated by BIRC6; this activity is inhibited by DIABLO/SMAC.

It is found in the cytoplasm. It catalyses the reaction Strict requirement for an Asp residue at positions P1 and P4. It has a preferred cleavage sequence of Asp-Xaa-Xaa-Asp-|- with a hydrophobic amino-acid residue at P2 and a hydrophilic amino-acid residue at P3, although Val or Ala are also accepted at this position.. Inhibited by BIRC6; following inhibition of BIRC6-caspase binding by DIABLO/SMAC, BIRC6 is subjected to caspase cleavage, leading to an increase in active caspases. Involved in the activation cascade of caspases responsible for apoptosis execution. At the onset of apoptosis, it proteolytically cleaves poly(ADP-ribose) polymerase PARP1 at a '216-Asp-|-Gly-217' bond. Cleaves and activates sterol regulatory element binding proteins (SREBPs) between the basic helix-loop-helix leucine zipper domain and the membrane attachment domain. Cleaves and activates caspase-6, -7 and -9 (CASP6, CASP7 and CASP9, respectively). Cleaves and inactivates interleukin-18 (IL18). Triggers cell adhesion in sympathetic neurons through RET cleavage. Cleaves IL-1 beta between an Asp and an Ala, releasing the mature cytokine which is involved in a variety of inflammatory processes. Cleaves and inhibits serine/threonine-protein kinase AKT1 in response to oxidative stress. Acts as an inhibitor of type I interferon production during virus-induced apoptosis by mediating cleavage of antiviral proteins CGAS, IRF3 and MAVS, thereby preventing cytokine overproduction. Also involved in pyroptosis by mediating cleavage and activation of gasdermin-E (GSDME). Cleaves XRCC4 and phospholipid scramblase proteins XKR4, XKR8 and XKR9, leading to promote phosphatidylserine exposure on apoptotic cell surface. Cleaves BIRC6 following inhibition of BIRC6-caspase binding by DIABLO/SMAC. The polypeptide is Caspase-3 (CASP3) (Saimiri boliviensis boliviensis (Bolivian squirrel monkey)).